We begin with the raw amino-acid sequence, 636 residues long: Capsid vertex component 2 (636 aa).

The tract at residues 1–48 (MSLLHTFWRLPVAVFFEPHEENVLRCPERVLRRLLEDAAVAMRGGGWR) is interaction with major capsid protein/MCP. The segment at 97–125 (DEGPSPRTLLQPPCRPRSSSPGTGVAGAS) is disordered.

This sequence belongs to the herpesviridae CVC2 protein family. As to quaternary structure, heterodimerizes with CVC1. Interacts with major capsid protein/MCP and triplex capsid protein 1/TRX1 at the pentamer vertices. Interacts with the large tegument protein/LTP.

The protein localises to the virion. The protein resides in the host nucleus. In terms of biological role, capsid vertex-specific component that plays a role during viral DNA encapsidation, assuring correct genome cleavage and presumably stabilizing capsids that contain full-length viral genomes. Participates in the interaction between the capsid and the tegument through interaction with the large tegument protein/LTP. This is Capsid vertex component 2 from Homo sapiens (Human).